A 388-amino-acid polypeptide reads, in one-letter code: Protein RMD5 homolog (388 aa).

The region spanning 112 to 144 (DTHIVNQIIANFFYRQGMFDIGDCFVAETGESE) is the LisH domain. The 58-residue stretch at 150 to 207 (SFVEMYRILEAMKRRDLEPALNWAVSNSDKLKEARSDLEMKLHSLHFLEIARGKNSKE) folds into the CTLH domain. The RING-Gid-type zinc finger occupies 330 to 374 (CPVSKEQSSDDNPPMMMSCGHVLCKQTINKMSKNGSKSSFKCPYC).

In terms of assembly, interacts with RANBPM.

The protein localises to the cytoplasm. This chain is Protein RMD5 homolog, found in Arabidopsis thaliana (Mouse-ear cress).